A 523-amino-acid chain; its full sequence is Cyclin-dependent kinase 17 (523 aa).

A Phosphoserine modification is found at serine 9. Residues 30 to 55 (TIEESSSKDNEPIVKNGRPPTSHSVH) form a disordered region. Residues serine 80, serine 92, and serine 105 each carry the phosphoserine modification. A disordered region spans residues 103-123 (MGSDGESDQASGTSSDEVQSP). The segment covering 110–123 (DQASGTSSDEVQSP) has biased composition (polar residues). Phosphoserine occurs at positions 137, 146, 165, and 180. The 282-residue stretch at 192–473 (YIKLEKLGEG…AEEAMKHVYF (282 aa)) folds into the Protein kinase domain. ATP is bound by residues 198–206 (LGEGTYATV) and lysine 221. Aspartate 313 (proton acceptor) is an active-site residue. The disordered stretch occupies residues 501–523 (PGFRNSSYPETGHGKNRRQSMLF). Positions 514–523 (GKNRRQSMLF) are enriched in basic residues.

The protein belongs to the protein kinase superfamily. CMGC Ser/Thr protein kinase family. CDC2/CDKX subfamily. Found in a complex containing CABLES1, CDK16 and TDRD7. Interacts with TDRD7.

It carries out the reaction L-seryl-[protein] + ATP = O-phospho-L-seryl-[protein] + ADP + H(+). It catalyses the reaction L-threonyl-[protein] + ATP = O-phospho-L-threonyl-[protein] + ADP + H(+). Its function is as follows. May play a role in terminally differentiated neurons. Has a Ser/Thr-phosphorylating activity for histone H1. The sequence is that of Cyclin-dependent kinase 17 (Cdk17) from Mus musculus (Mouse).